The primary structure comprises 138 residues: DNA-directed RNA polymerase subunit omega (138 aa).

Residues 104–138 form a disordered region; sequence GNSDGLENSSNSRDDNPLGRDNFFSTPENRNNTNS. Over residues 126 to 138 the composition is skewed to polar residues; it reads FFSTPENRNNTNS.

The protein belongs to the RNA polymerase subunit omega family. In terms of assembly, the RNAP catalytic core consists of 2 alpha, 1 beta, 1 beta' and 1 omega subunit. When a sigma factor is associated with the core the holoenzyme is formed, which can initiate transcription.

It catalyses the reaction RNA(n) + a ribonucleoside 5'-triphosphate = RNA(n+1) + diphosphate. Functionally, promotes RNA polymerase assembly. Latches the N- and C-terminal regions of the beta' subunit thereby facilitating its interaction with the beta and alpha subunits. The sequence is that of DNA-directed RNA polymerase subunit omega from Ehrlichia chaffeensis (strain ATCC CRL-10679 / Arkansas).